A 331-amino-acid chain; its full sequence is Aspartate carbamoyltransferase catalytic subunit (331 aa).

Residues Arg76 and Thr77 each coordinate carbamoyl phosphate. An L-aspartate-binding site is contributed by Lys104. Carbamoyl phosphate-binding residues include Arg126, His154, and Gln157. The L-aspartate site is built by Arg187 and Arg246. Positions 287 and 288 each coordinate carbamoyl phosphate.

The protein belongs to the aspartate/ornithine carbamoyltransferase superfamily. ATCase family. In terms of assembly, heterododecamer (2C3:3R2) of six catalytic PyrB chains organized as two trimers (C3), and six regulatory PyrI chains organized as three dimers (R2).

It catalyses the reaction carbamoyl phosphate + L-aspartate = N-carbamoyl-L-aspartate + phosphate + H(+). It functions in the pathway pyrimidine metabolism; UMP biosynthesis via de novo pathway; (S)-dihydroorotate from bicarbonate: step 2/3. Its function is as follows. Catalyzes the condensation of carbamoyl phosphate and aspartate to form carbamoyl aspartate and inorganic phosphate, the committed step in the de novo pyrimidine nucleotide biosynthesis pathway. The sequence is that of Aspartate carbamoyltransferase catalytic subunit from Dehalococcoides mccartyi (strain ATCC BAA-2100 / JCM 16839 / KCTC 5957 / BAV1).